Consider the following 162-residue polypeptide: Caveolin-2 (162 aa).

Residues 1 to 86 lie on the Cytoplasmic side of the membrane; the sequence is MGLETEKADV…FEISKYVMYK (86 aa). The residue at position 19 (Tyr19) is a Phosphotyrosine; by SRC. Phosphoserine is present on residues Ser20 and Ser23. At Tyr27 the chain carries Phosphotyrosine. The residue at position 36 (Ser36) is a Phosphoserine. An intramembrane region (helical) is located at residues 87–107; that stretch reads FLTVFLAIPLAFIAGILFATL. Residues 108 to 162 are Cytoplasmic-facing; that stretch reads SCLHIWILMPFVKTCLMVLPSVQTIWKSVTDVVIGPLCTSVGRSFSSVSMQLSHD.

Belongs to the caveolin family. Monomer or homodimer. Interacts with CAV1; the interaction forms a stable heterooligomeric complex that is required for targeting to lipid rafts and for caveolae formation. Tyrosine phosphorylated forms do not form heterooligomers with the Tyr-19-phosphorylated form existing as a monomer or dimer, and the Tyr-27-form as a monomer only. Interacts (tyrosine phosphorylated form) with the SH2 domain-containing proteins, RASA1, NCK1 and SRC. Interacts (tyrosine phosphorylated form) with INSR, the interaction (Tyr-27-phosphorylated form) is increased on insulin stimulation. Interacts (Tyr-19 phosphorylated form) with MAPK1 (phosphorylated form); the interaction, promoted by insulin, leads to nuclear location and MAPK1 activation. Interacts with STAT3; the interaction is increased on insulin-induced tyrosine phosphorylation leading to STAT activation. In terms of processing, phosphorylated on serine and tyrosine residues. CAV1 promotes phosphorylation on Ser-23 which then targets the complex to the plasma membrane, lipid rafts and caveolae. Phosphorylation on Ser-36 appears to modulate mitosis in endothelial cells. Phosphorylation on both Tyr-19 and Tyr-27 is required for insulin-induced 'Ser-727' phosphorylation of STAT3 and its activation. Phosphorylation on Tyr-19 is required for insulin-induced phosphorylation of MAPK1 and DNA binding of STAT3. Tyrosine phosphorylation is induced by both EGF and insulin.

The protein resides in the nucleus. The protein localises to the cytoplasm. It localises to the golgi apparatus membrane. It is found in the cell membrane. Its subcellular location is the membrane. The protein resides in the caveola. Its function is as follows. May act as a scaffolding protein within caveolar membranes. Interacts directly with G-protein alpha subunits and can functionally regulate their activity. Acts as an accessory protein in conjunction with CAV1 in targeting to lipid rafts and driving caveolae formation. The Ser-36 phosphorylated form has a role in modulating mitosis in endothelial cells. Positive regulator of cellular mitogenesis of the MAPK signaling pathway. Required for the insulin-stimulated nuclear translocation and activation of MAPK1 and STAT3, and the subsequent regulation of cell cycle progression. The protein is Caveolin-2 (Cav2) of Mus musculus (Mouse).